We begin with the raw amino-acid sequence, 1463 residues long: DNA polymerase III PolC-type (1463 aa).

Positions 425–581 (YVVFDVETTG…YDAEATGRLL (157 aa)) constitute an Exonuclease domain.

This sequence belongs to the DNA polymerase type-C family. PolC subfamily.

It localises to the cytoplasm. The catalysed reaction is DNA(n) + a 2'-deoxyribonucleoside 5'-triphosphate = DNA(n+1) + diphosphate. Required for replicative DNA synthesis. This DNA polymerase also exhibits 3' to 5' exonuclease activity. This chain is DNA polymerase III PolC-type, found in Streptococcus pneumoniae serotype 4 (strain ATCC BAA-334 / TIGR4).